The following is a 350-amino-acid chain: Biotin synthase (350 aa).

The region spanning 38-256 (NYVQVSTLLS…IAVARIMMPE (219 aa)) is the Radical SAM core domain. [4Fe-4S] cluster is bound by residues Cys53, Cys57, and Cys60. 4 residues coordinate [2Fe-2S] cluster: Cys97, Cys128, Cys188, and Arg260.

It belongs to the radical SAM superfamily. Biotin synthase family. In terms of assembly, homodimer. Requires [4Fe-4S] cluster as cofactor. The cofactor is [2Fe-2S] cluster.

The catalysed reaction is (4R,5S)-dethiobiotin + (sulfur carrier)-SH + 2 reduced [2Fe-2S]-[ferredoxin] + 2 S-adenosyl-L-methionine = (sulfur carrier)-H + biotin + 2 5'-deoxyadenosine + 2 L-methionine + 2 oxidized [2Fe-2S]-[ferredoxin]. It functions in the pathway cofactor biosynthesis; biotin biosynthesis; biotin from 7,8-diaminononanoate: step 2/2. Catalyzes the conversion of dethiobiotin (DTB) to biotin by the insertion of a sulfur atom into dethiobiotin via a radical-based mechanism. This chain is Biotin synthase, found in Aliivibrio salmonicida (strain LFI1238) (Vibrio salmonicida (strain LFI1238)).